A 621-amino-acid chain; its full sequence is 1-deoxy-D-xylulose-5-phosphate synthase (621 aa).

Residues His80 and 121 to 123 each bind thiamine diphosphate; that span reads GHS. Asp152 serves as a coordination point for Mg(2+). Residues 153-154, Asn181, Tyr288, and Glu370 contribute to the thiamine diphosphate site; that span reads GA. Asn181 contacts Mg(2+).

The protein belongs to the transketolase family. DXPS subfamily. In terms of assembly, homodimer. Mg(2+) is required as a cofactor. The cofactor is thiamine diphosphate.

The catalysed reaction is D-glyceraldehyde 3-phosphate + pyruvate + H(+) = 1-deoxy-D-xylulose 5-phosphate + CO2. It participates in metabolic intermediate biosynthesis; 1-deoxy-D-xylulose 5-phosphate biosynthesis; 1-deoxy-D-xylulose 5-phosphate from D-glyceraldehyde 3-phosphate and pyruvate: step 1/1. Functionally, catalyzes the acyloin condensation reaction between C atoms 2 and 3 of pyruvate and glyceraldehyde 3-phosphate to yield 1-deoxy-D-xylulose-5-phosphate (DXP). The chain is 1-deoxy-D-xylulose-5-phosphate synthase from Pseudoalteromonas atlantica (strain T6c / ATCC BAA-1087).